Here is a 143-residue protein sequence, read N- to C-terminus: Large ribosomal subunit protein uL16 (143 aa).

Basic residues predominate over residues 1 to 17 (MLQPKRTKFRKAHKGRI). Residues 1 to 21 (MLQPKRTKFRKAHKGRIHGNA) form a disordered region.

It belongs to the universal ribosomal protein uL16 family. Part of the 50S ribosomal subunit.

Functionally, binds 23S rRNA and is also seen to make contacts with the A and possibly P site tRNAs. The protein is Large ribosomal subunit protein uL16 of Rhizorhabdus wittichii (strain DSM 6014 / CCUG 31198 / JCM 15750 / NBRC 105917 / EY 4224 / RW1) (Sphingomonas wittichii).